A 220-amino-acid polypeptide reads, in one-letter code: Orotate phosphoribosyltransferase (220 aa).

Position 26 (lysine 26) interacts with 5-phospho-alpha-D-ribose 1-diphosphate. 34-35 (FF) contacts orotate. 5-phospho-alpha-D-ribose 1-diphosphate-binding positions include 72–73 (YK), arginine 99, lysine 100, lysine 103, histidine 105, and 125–133 (DDVISAGTS). Orotate-binding residues include serine 129 and arginine 157.

It belongs to the purine/pyrimidine phosphoribosyltransferase family. PyrE subfamily. As to quaternary structure, homodimer. The cofactor is Mg(2+).

The catalysed reaction is orotidine 5'-phosphate + diphosphate = orotate + 5-phospho-alpha-D-ribose 1-diphosphate. It functions in the pathway pyrimidine metabolism; UMP biosynthesis via de novo pathway; UMP from orotate: step 1/2. Its function is as follows. Catalyzes the transfer of a ribosyl phosphate group from 5-phosphoribose 1-diphosphate to orotate, leading to the formation of orotidine monophosphate (OMP). The protein is Orotate phosphoribosyltransferase of Nitrosococcus oceani (strain ATCC 19707 / BCRC 17464 / JCM 30415 / NCIMB 11848 / C-107).